A 322-amino-acid chain; its full sequence is RNA-binding motif protein, X-linked 2 (322 aa).

Lys-8 is covalently cross-linked (Glycyl lysine isopeptide (Lys-Gly) (interchain with G-Cter in SUMO2)). Positions 36 to 114 (AWIFLGGLPY…RTIRVDHVSN (79 aa)) constitute an RRM domain. Residues 134 to 322 (KGCGARTPSP…SSNPSDRWRH (189 aa)) are disordered. Thr-140 carries the phosphothreonine modification. Residue Ser-149 is modified to Phosphoserine. Residues 155–171 (TKKHKKDKKEKKKKKKE) show a composition bias toward basic residues. A phosphoserine mark is found at Ser-186 and Ser-188. The span at 195-223 (KEKDDTGPKKHSSKNSERAQKSEPREGQK) shows a compositional bias: basic and acidic residues. A Phosphoserine modification is found at Ser-232. Over residues 240–274 (RELKKEKPKHEHKSSSRREAREEKTRIRDRGRSSD) the composition is skewed to basic and acidic residues. A Glycyl lysine isopeptide (Lys-Gly) (interchain with G-Cter in SUMO2) cross-link involves residue Lys-243. Ser-272 is modified (phosphoserine). The span at 289–308 (YRSRSRSRDKSHRHKRARRS) shows a compositional bias: basic residues. Ser-314 bears the Phosphoserine mark.

Belongs to the IST3 family. As to quaternary structure, part of the activated spliceosome B/catalytic step 1 spliceosome, one of the forms of the spliceosome which has a well-formed active site but still cannot catalyze the branching reaction and is composed of at least 52 proteins, the U2, U5 and U6 snRNAs and the pre-mRNA. Component of the minor spliceosome, which splices U12-type introns.

The protein localises to the nucleus. In terms of biological role, involved in pre-mRNA splicing as component of the activated spliceosome. As a component of the minor spliceosome, involved in the splicing of U12-type introns in pre-mRNAs. The chain is RNA-binding motif protein, X-linked 2 (RBMX2) from Homo sapiens (Human).